Reading from the N-terminus, the 140-residue chain is RxLR effector protein CRE9 (140 aa).

An N-terminal signal peptide occupies residues 1–24 (MRTSVFVALVVATFVATCISFTSA). A RxLR-dEER motif is present at residues 43 to 61 (RTLAEADDWWLASTNTEER). Residues 119-139 (LKILYGALLAGLIIVGVEAML) traverse the membrane as a helical segment.

Belongs to the RxLR effector family.

It is found in the secreted. It localises to the host cell. The protein localises to the membrane. Its function is as follows. Effector that is involved in host plant infection. Contributes to virulence during the early infection stage, by inhibiting plant defense responses induced by both PAMP-triggered immunity (PTI) and effector-triggered immunity (ETI). This Phytophthora infestans (strain T30-4) (Potato late blight agent) protein is RxLR effector protein CRE9.